Consider the following 475-residue polypeptide: Sulfate adenylyltransferase subunit 1 (475 aa).

Residues 25–239 form the tr-type G domain; the sequence is KSLLRFLTCG…EVLETVEIQR (215 aa). Positions 34-41 are G1; that stretch reads GSVDDGKS. 34-41 contacts GTP; it reads GSVDDGKS. Residues 92-96 are G2; the sequence is GITID. A G3 region spans residues 113 to 116; it reads DTPG. Residues 113-117 and 168-171 each bind GTP; these read DTPGH and NKMD. The G4 stretch occupies residues 168 to 171; sequence NKMD. Residues 206–208 form a G5 region; the sequence is SAL.

The protein belongs to the TRAFAC class translation factor GTPase superfamily. Classic translation factor GTPase family. CysN/NodQ subfamily. Heterodimer composed of CysD, the smaller subunit, and CysN.

The catalysed reaction is sulfate + ATP + H(+) = adenosine 5'-phosphosulfate + diphosphate. It participates in sulfur metabolism; hydrogen sulfide biosynthesis; sulfite from sulfate: step 1/3. With CysD forms the ATP sulfurylase (ATPS) that catalyzes the adenylation of sulfate producing adenosine 5'-phosphosulfate (APS) and diphosphate, the first enzymatic step in sulfur assimilation pathway. APS synthesis involves the formation of a high-energy phosphoric-sulfuric acid anhydride bond driven by GTP hydrolysis by CysN coupled to ATP hydrolysis by CysD. In Escherichia coli O17:K52:H18 (strain UMN026 / ExPEC), this protein is Sulfate adenylyltransferase subunit 1.